We begin with the raw amino-acid sequence, 289 residues long: uncharacterized protein (289 aa).

A run of 10 helical transmembrane segments spans residues 7-27 (LLLA…KIGL), 33-53 (FNLA…WVFW), 65-85 (WLHL…FQFL), 92-112 (ATNA…WGLV), 123-143 (GVFL…LEFF), 148-168 (IFGD…TVLG), 182-202 (AYAF…SGFA), 212-232 (VAAL…VWYY), 241-261 (SVAV…FYAL), and 265-285 (PDFF…LTTA). 2 consecutive EamA domains span residues 14 to 136 (LIWA…LIVS) and 159 to 285 (FLWA…LTTA).

This sequence belongs to the EamA transporter family.

It localises to the cell membrane. This is an uncharacterized protein from Archaeoglobus fulgidus (strain ATCC 49558 / DSM 4304 / JCM 9628 / NBRC 100126 / VC-16).